The chain runs to 147 residues: Neocarzinostatin (147 aa).

A signal peptide spans 1 to 34 (MVPISIIRNRVAKVAVGSAAVLGLAVGFQTPAVA). 2 disulfides stabilise this stretch: Cys-71–Cys-81 and Cys-122–Cys-127.

Belongs to the neocarzinostatin family.

In terms of biological role, NCS has antibiotic activity (for Gram-positive bacteria) and antitumor activity (for certain mouse tumors). NCS binds non-covalently to a chromophore which is the cytotoxic and mutagenic component of the antibiotic. The chromophore binds to DNA as a weak intercalator and causes single- and double-strand breaks. This Streptomyces carzinostaticus protein is Neocarzinostatin (ncsA).